The sequence spans 600 residues: Proline--tRNA ligase (600 aa).

It belongs to the class-II aminoacyl-tRNA synthetase family. ProS type 1 subfamily. Homodimer.

The protein resides in the cytoplasm. It catalyses the reaction tRNA(Pro) + L-proline + ATP = L-prolyl-tRNA(Pro) + AMP + diphosphate. Its function is as follows. Catalyzes the attachment of proline to tRNA(Pro) in a two-step reaction: proline is first activated by ATP to form Pro-AMP and then transferred to the acceptor end of tRNA(Pro). As ProRS can inadvertently accommodate and process non-cognate amino acids such as alanine and cysteine, to avoid such errors it has two additional distinct editing activities against alanine. One activity is designated as 'pretransfer' editing and involves the tRNA(Pro)-independent hydrolysis of activated Ala-AMP. The other activity is designated 'posttransfer' editing and involves deacylation of mischarged Ala-tRNA(Pro). The misacylated Cys-tRNA(Pro) is not edited by ProRS. The polypeptide is Proline--tRNA ligase (Prochlorococcus marinus (strain MIT 9515)).